The chain runs to 140 residues: Ribonuclease P protein subunit p20 (140 aa).

The protein belongs to the histone-like Alba family. Component of nuclear RNase P and RNase MRP complexes. RNase P consists of a catalytic RNA moiety and 10 different protein chains; POP1, POP4, POP5, POP7, RPP14, RPP21, RPP25, RPP30, RPP38 and RPP40. Within the RNase P complex, POP1, POP7 and RPP25 form the 'finger' subcomplex, POP5, RPP14, RPP40 and homodimeric RPP30 form the 'palm' subcomplex, and RPP21, POP4 and RPP38 form the 'wrist' subcomplex. All subunits of the RNase P complex interact with the catalytic RNA. Several subunits of RNase P are also part of the RNase MRP complex. RNase MRP consists of a catalytic RNA moiety and about 8 protein subunits; POP1, POP7, RPP25, RPP30, RPP38, RPP40 and possibly also POP4 and POP5. Interacts with SMN1. POP7 forms a heterodimer with RPP25 that binds to the P3 stem loop of the catalytic RNA.

It localises to the nucleus. It is found in the nucleolus. The protein resides in the cytoplasm. The protein localises to the cytoplasmic granule. Its function is as follows. Component of ribonuclease P, a ribonucleoprotein complex that generates mature tRNA molecules by cleaving their 5'-ends. Also a component of the MRP ribonuclease complex, which cleaves pre-rRNA sequences. This Mus musculus (Mouse) protein is Ribonuclease P protein subunit p20 (Pop7).